A 420-amino-acid chain; its full sequence is Mannose-1-phosphate guanylyltransferase regulatory subunit alpha (420 aa).

The tract at residues 2–251 (LKAVILIGGP…DGIWSQIKSA (250 aa)) is substrate-binding domain. GDP-alpha-D-mannose contacts are provided by Glu85 and Gln247. The hexapeptide repeat domain stretch occupies residues 273–420 (LAKHTPGGPR…SRSFTNQIIL (148 aa)). A C-loop region spans residues 356–384 (TPNDPNPNDPRARMDSESLFKDGKLLPAI).

The protein belongs to the transferase hexapeptide repeat family. As to quaternary structure, component of the GMPPA-GMPPB mannose-1-phosphate guanylyltransferase complex composed of 4 GMPPA subunits and 8 GMPPB subunits; the complex is organized into three layers, a central layer made up of 2 GMPPA dimers sandwiched between two layers each made up of 2 GMPPB dimers.

Its subcellular location is the cytoplasm. In terms of biological role, regulatory subunit of the GMPPA-GMPPB mannose-1-phosphate guanylyltransferase complex; reduces the catalytic activity of GMPPB when part of the complex. Mediates allosteric feedback inhibition of GMPPB catalytic activity upon binding GDP-alpha-D-mannose. Together with GMPPB regulates GDP-alpha-D-mannose levels. The sequence is that of Mannose-1-phosphate guanylyltransferase regulatory subunit alpha (GMPPA) from Papio anubis (Olive baboon).